The following is a 310-amino-acid chain: Junctional adhesion molecule C (310 aa).

An N-terminal signal peptide occupies residues 1 to 31; it reads MALSRRLRLRLCARLPDFFLLLLFRGCVIEA. The Extracellular segment spans residues 32-241; that stretch reads VNLKSSNRNP…GQDMEVYDLN (210 aa). Positions 35 to 127 constitute an Ig-like V-type domain; that stretch reads KSSNRNPVVH…VALNDRKEVD (93 aa). 2 disulfides stabilise this stretch: Cys53/Cys115 and Cys160/Cys219. N-linked (GlcNAc...) asparagine glycosylation is found at Asn104 and Asn192. An Ig-like C2-type domain is found at 139 to 236; the sequence is PVAPVCRVPK…AARCEGQDME (98 aa). A helical membrane pass occupies residues 242-262; it reads IAGIIGGVLVVLIVLAVITMG. The Cytoplasmic segment spans residues 263 to 310; sequence ICCAYRRGCFISSKQDGESYKSPGKHEGVNYIRTSEEGDFRHKSSFVI. Residues Cys264 and Cys265 are each lipidated (S-palmitoyl cysteine).

It belongs to the immunoglobulin superfamily. In terms of assembly, interacts with ITGAM. Interacts with GORASP2. In terms of processing, proteolytically cleaved from endothelial cells surface into a soluble form by ADAM10 and ADAM17; the release of soluble JAM3 is increased by pro-inflammatory factors. S-palmitoylated by ZDHHC7. S-palmitoylation promotes expression at tight junctions.

The protein resides in the cell membrane. It is found in the cell junction. The protein localises to the desmosome. Its subcellular location is the tight junction. It localises to the secreted. Junctional adhesion protein that mediates heterotypic cell-cell interactions with its cognate receptor JAM2 to regulate different cellular processes. Plays a role in homing and mobilization of hematopoietic stem and progenitor cells within the bone marrow. At the surface of bone marrow stromal cells, it contributes to the retention of the hematopoietic stem and progenitor cells expressing JAM3. Plays a central role in leukocytes extravasation by facilitating transmigration through the endothelium. Plays a role in spermatogenesis where JAM2 and JAM3, which are respectively expressed by Sertoli and germ cells, mediate an interaction between both cell types and play an essential role in the anchorage of germ cells onto Sertoli cells and the assembly of cell polarity complexes during spermatid differentiation. Also functions as a counter-receptor for ITGAM, mediating leukocyte-platelet interactions and is involved in the regulation of transepithelial migration of polymorphonuclear neutrophils (PMN). Plays a role in angiogenesis. Plays a role in the regulation of cell migration. During myogenesis, it is involved in myocyte fusion. Its function is as follows. Promotes chemotaxis of vascular endothelial cells and stimulates angiogenesis. The polypeptide is Junctional adhesion molecule C (Jam3) (Rattus norvegicus (Rat)).